Consider the following 209-residue polypeptide: MIAIIDYGMGNIRSVEQALKHIGAAYIVTSDKEEIFRSDGVILPGVGAFPKAMDVLEEKDLVRVLQEIGRSRKPLLGICLGMQLLFEKSEELQDCNGLSLLPGVIRKLKVPYKIPHMGWNELKKEGEIALWNGVEDGSFVYYVHSYYADCPNEIVYGISDYGVKVPGFVAKENIYGAQFHPEKSGDIGMQMLKNFKGVVESWKSSQLSI.

The 205-residue stretch at 1 to 205 (MIAIIDYGMG…KGVVESWKSS (205 aa)) folds into the Glutamine amidotransferase type-1 domain. C79 functions as the Nucleophile in the catalytic mechanism. Catalysis depends on residues H180 and E182.

Heterodimer of HisH and HisF.

The protein resides in the cytoplasm. It catalyses the reaction 5-[(5-phospho-1-deoxy-D-ribulos-1-ylimino)methylamino]-1-(5-phospho-beta-D-ribosyl)imidazole-4-carboxamide + L-glutamine = D-erythro-1-(imidazol-4-yl)glycerol 3-phosphate + 5-amino-1-(5-phospho-beta-D-ribosyl)imidazole-4-carboxamide + L-glutamate + H(+). It carries out the reaction L-glutamine + H2O = L-glutamate + NH4(+). It participates in amino-acid biosynthesis; L-histidine biosynthesis; L-histidine from 5-phospho-alpha-D-ribose 1-diphosphate: step 5/9. In terms of biological role, IGPS catalyzes the conversion of PRFAR and glutamine to IGP, AICAR and glutamate. The HisH subunit catalyzes the hydrolysis of glutamine to glutamate and ammonia as part of the synthesis of IGP and AICAR. The resulting ammonia molecule is channeled to the active site of HisF. The sequence is that of Imidazole glycerol phosphate synthase subunit HisH from Bacillus cereus (strain ATCC 10987 / NRS 248).